A 408-amino-acid polypeptide reads, in one-letter code: DNA replication and repair protein RecF (408 aa).

30–37 contacts ATP; sequence GSNGQGKT. 2 disordered regions span residues 220 to 252 and 389 to 408; these read DHGP…DGGR and SPTP…GGAA. The segment covering 389-402 has biased composition (low complexity); the sequence is SPTPASASEPASPG.

Belongs to the RecF family.

It is found in the cytoplasm. Functionally, the RecF protein is involved in DNA metabolism; it is required for DNA replication and normal SOS inducibility. RecF binds preferentially to single-stranded, linear DNA. It also seems to bind ATP. The protein is DNA replication and repair protein RecF of Clavibacter sepedonicus (Clavibacter michiganensis subsp. sepedonicus).